Consider the following 166-residue polypeptide: Phosphopantetheine adenylyltransferase (166 aa).

Serine 10 contributes to the substrate binding site. Residues 10–11 and histidine 18 each bind ATP; that span reads SF. Positions 42, 79, and 93 each coordinate substrate. ATP is bound by residues 94-96, glutamate 104, and 129-135; these read GLR and VRPITAT.

This sequence belongs to the bacterial CoaD family. As to quaternary structure, homohexamer. Requires Mg(2+) as cofactor.

It is found in the cytoplasm. The catalysed reaction is (R)-4'-phosphopantetheine + ATP + H(+) = 3'-dephospho-CoA + diphosphate. Its pathway is cofactor biosynthesis; coenzyme A biosynthesis; CoA from (R)-pantothenate: step 4/5. Functionally, reversibly transfers an adenylyl group from ATP to 4'-phosphopantetheine, yielding dephospho-CoA (dPCoA) and pyrophosphate. The chain is Phosphopantetheine adenylyltransferase from Methylobacterium nodulans (strain LMG 21967 / CNCM I-2342 / ORS 2060).